Consider the following 131-residue polypeptide: Large ribosomal subunit protein bL17 (131 aa).

Belongs to the bacterial ribosomal protein bL17 family. As to quaternary structure, part of the 50S ribosomal subunit. Contacts protein L32.

The protein is Large ribosomal subunit protein bL17 of Janthinobacterium sp. (strain Marseille) (Minibacterium massiliensis).